A 233-amino-acid polypeptide reads, in one-letter code: Large ribosomal subunit protein uL1 (233 aa).

This sequence belongs to the universal ribosomal protein uL1 family. In terms of assembly, part of the 50S ribosomal subunit.

Its function is as follows. Binds directly to 23S rRNA. Forms the L1 stalk. Unlike the case in the Thermus thermophilus 70S ribosome, this protein is not seen to block the exit path of the E site tRNA. It is clear that the protein in the structure is flexible however, so this is probably due to its position in these crystals. In terms of biological role, protein L1 is also a translational repressor protein, it controls the translation of the L11 operon by binding to its mRNA. The chain is Large ribosomal subunit protein uL1 (rplA) from Deinococcus radiodurans (strain ATCC 13939 / DSM 20539 / JCM 16871 / CCUG 27074 / LMG 4051 / NBRC 15346 / NCIMB 9279 / VKM B-1422 / R1).